A 482-amino-acid polypeptide reads, in one-letter code: GTPase Obg (482 aa).

The 158-residue stretch at 2-159 (PRFIDRVVVH…RELTLELKTV (158 aa)) folds into the Obg domain. Residues 160-341 (ADVGLVGFPS…LIFALWDMVA (182 aa)) enclose the OBG-type G domain. Residues 166-173 (GFPSAGKS), 191-195 (FTTLA), 212-215 (DVPG), 292-295 (NKID), and 322-324 (STV) each bind GTP. Positions 173 and 193 each coordinate Mg(2+). An OCT domain is found at 359-437 (PIPVDETAFS…IGDMTFDWEP (79 aa)). The segment at 450–482 (RGTDVRLEQTDRVGADERKAARKARRQSDDGEE) is disordered. Over residues 452-468 (TDVRLEQTDRVGADERK) the composition is skewed to basic and acidic residues.

Belongs to the TRAFAC class OBG-HflX-like GTPase superfamily. OBG GTPase family. Monomer. It depends on Mg(2+) as a cofactor.

The protein localises to the cytoplasm. An essential GTPase which binds GTP, GDP and possibly (p)ppGpp with moderate affinity, with high nucleotide exchange rates and a fairly low GTP hydrolysis rate. Plays a role in control of the cell cycle, stress response, ribosome biogenesis and in those bacteria that undergo differentiation, in morphogenesis control. This chain is GTPase Obg, found in Mycolicibacterium gilvum (strain PYR-GCK) (Mycobacterium gilvum (strain PYR-GCK)).